The sequence spans 153 residues: MNIVTGQLNAHGKKFAIVVSRFNEFITNKLISGAEDILKRHSVADEDISVYWVPGAFEIPAVAKKIAENGKDNGVICLGCVIRGATPHFDYISAEVSKGVASIALQSNVPVIFGVLTTDSIEQAVERAGTKAGNKGSDAAMSAIEMVNLYSAI.

5-amino-6-(D-ribitylamino)uracil contacts are provided by residues Phe22, 56–58 (AFE), and 80–82 (CVI). 85–86 (AT) is a binding site for (2S)-2-hydroxy-3-oxobutyl phosphate. The Proton donor role is filled by His88. A 5-amino-6-(D-ribitylamino)uracil-binding site is contributed by Phe113. (2S)-2-hydroxy-3-oxobutyl phosphate is bound at residue Arg127.

The protein belongs to the DMRL synthase family.

The enzyme catalyses (2S)-2-hydroxy-3-oxobutyl phosphate + 5-amino-6-(D-ribitylamino)uracil = 6,7-dimethyl-8-(1-D-ribityl)lumazine + phosphate + 2 H2O + H(+). Its pathway is cofactor biosynthesis; riboflavin biosynthesis; riboflavin from 2-hydroxy-3-oxobutyl phosphate and 5-amino-6-(D-ribitylamino)uracil: step 1/2. In terms of biological role, catalyzes the formation of 6,7-dimethyl-8-ribityllumazine by condensation of 5-amino-6-(D-ribitylamino)uracil with 3,4-dihydroxy-2-butanone 4-phosphate. This is the penultimate step in the biosynthesis of riboflavin. In Endomicrobium trichonymphae, this protein is 6,7-dimethyl-8-ribityllumazine synthase.